A 239-amino-acid chain; its full sequence is Lipid transferase CIDEC (239 aa).

Residues 1-35 (MDYAMKSLSLLYPRSLSRHVAVSTAVVTQQLVSKP) are required for liquid-liquid phase separation (LLPS). In terms of domain architecture, CIDE-N spans 41–118 (RARPCRVSTA…VLLKGQKWKP (78 aa)). Positions 123-126 (RKKR) match the RKKR polybasic motif motif.

This sequence belongs to the CIDE family. In terms of assembly, homodimer. Homooligomer; undergoes liquid-liquid phase separation (LLPS) via its N-terminus, facilitating lipid droplet fusion, occurs at the lipid droplet contact sites. Interacts with CIDEA. Interacts with PLIN1. Interacts with NFAT5; this interaction is direct and retains NFAT5 in the cytoplasm. Interacts with CEBPB. Interacts with isoform CLSTN3beta of CLSTN3; inhibiting the lipid transferase activity of CIDEC. Post-translationally, ubiquitinated and targeted to proteasomal degradation, resulting in a short half-life (about 15 minutes in 3T3-L1 cells). Protein stability depends on triaclyglycerol synthesis, fatty acid availability and lipid droplet formation. As to expression, expressed almost exclusively in adipose tissue, including subcutaneous and epididymal white adipose tissue (at protein level). Although abundantly present in brown adipose tissue at the mRNA level, the protein is almost undetectable in this tissue, or at moderate levels. Expressed in the mammary gland, in stromal adipose tissue, but becomes undetectable at the end of pregnancy and during lactation (at protein level). Expressed at low levels in skeletal muscle and heart.

It localises to the lipid droplet. The protein localises to the endoplasmic reticulum. The protein resides in the nucleus. The catalysed reaction is a triacyl-sn-glycerol(in) = a triacyl-sn-glycerol(out). Functionally, lipid transferase specifically expressed in white adipose tissue, which promotes unilocular lipid droplet formation by mediating lipid droplet fusion. Lipid droplet fusion promotes their enlargement, restricting lipolysis and favoring lipid storage. Localizes on the lipid droplet surface, at focal contact sites between lipid droplets, and mediates atypical lipid droplet fusion by undergoing liquid-liquid phase separation (LLPS) and promoting directional net neutral lipid transfer from the smaller to larger lipid droplets. The transfer direction may be driven by the internal pressure difference between the contacting lipid droplet pair. Its role in neutral lipid transfer and lipid droplet enlargement is activated by the interaction with PLIN1. May also act as a CEBPB coactivator in the white adipose tissue to control the expression of a subset of CEBPB downstream target genes, including SOCS1, SOCS3, TGFB1, TGFBR1, ID2 and XDH. When overexpressed in preadipocytes, induces apoptosis or increases cell susceptibility to apoptosis induced by serum deprivation or TGFB treatment. In Mus musculus (Mouse), this protein is Lipid transferase CIDEC.